An 87-amino-acid chain; its full sequence is DNA-directed RNA polymerase subunit omega (87 aa).

Belongs to the RNA polymerase subunit omega family. As to quaternary structure, the RNAP catalytic core consists of 2 alpha, 1 beta, 1 beta' and 1 omega subunit. When a sigma factor is associated with the core the holoenzyme is formed, which can initiate transcription.

It carries out the reaction RNA(n) + a ribonucleoside 5'-triphosphate = RNA(n+1) + diphosphate. In terms of biological role, promotes RNA polymerase assembly. Latches the N- and C-terminal regions of the beta' subunit thereby facilitating its interaction with the beta and alpha subunits. The sequence is that of DNA-directed RNA polymerase subunit omega from Pseudomonas syringae pv. syringae (strain B728a).